Here is a 732-residue protein sequence, read N- to C-terminus: Adducin-related protein 1 (732 aa).

Disordered regions lie at residues 1-22 (MIGR…DPEY) and 684-732 (TRFS…KKDK). A compositionally biased stretch (polar residues) spans 685 to 705 (RFSSTQGTSEGNTTSRSCTTA). Residues 716 to 732 (KKKKKKGFLSFMRKKDK) show a composition bias toward basic residues.

It belongs to the aldolase class II family. Adducin subfamily.

It localises to the cytoplasm. It is found in the cytoskeleton. The protein resides in the cell membrane. In terms of biological role, membrane-cytoskeleton-associated protein that promotes the assembly of the spectrin-actin network. Plays a role in time-dependent memmory loss and the retention of conditioned behavior over time. The polypeptide is Adducin-related protein 1 (Caenorhabditis elegans).